The primary structure comprises 975 residues: Chromosome transmission fidelity protein 18 homolog (975 aa).

Disordered stretches follow at residues 30–83 (EGAS…KRQV) and 114–141 (SEEM…DLAE). Thr-51 carries the post-translational modification Phosphothreonine. The segment covering 58–77 (RGDAASSPAPAASVGSSQGG) has biased composition (low complexity). Ser-64 is subject to Phosphoserine. Residues 122–136 (PPDSSPTDITPPPSP) show a composition bias toward pro residues. A Phosphoserine modification is found at Ser-225. 2 disordered regions span residues 246 to 276 (SDTL…GQDA) and 320 to 346 (RPSR…KWKS). 374 to 381 (GPPGLGKT) is a binding site for ATP. Residues 858–896 (ASARVENSPQVDGSPPGLEGLLGGIGEKGVHRPAPRNHE) are disordered. The residue at position 871 (Ser-871) is a Phosphoserine.

The protein belongs to the activator 1 small subunits family. CTF18 subfamily. In terms of assembly, component of the CTF18-RFC complex, which consists of CTF18, CTF8, DCC1, RFC2, RFC3, RFC4 and RFC5. During assembly of the CTF18-RFC complex, CTF18 may first assemble into a subcomplex with RFC2, RFC3, RFC4 and RFC5. CTF18 then interacts directly with CTF8, which in turn interacts with DCC1. The CTF18-RFC complex associates with PCNA and with DNA polymerase POLH. The CTF18-RFC complex does not interact with the Rad9/Rad1/Hus1 complex. CTF18 interacts with SMC1A and RAD21. Interacts with DDX11.

Its subcellular location is the nucleus. In terms of biological role, chromosome cohesion factor involved in sister chromatid cohesion and fidelity of chromosome transmission. Component of one of the cell nuclear antigen loader complexes, CTF18-replication factor C (CTF18-RFC), which consists of CTF18, CTF8, DCC1, RFC2, RFC3, RFC4 and RFC5. The CTF18-RFC complex binds to single-stranded and primed DNAs and has weak ATPase activity that is stimulated by the presence of primed DNA, replication protein A (RPA) and by proliferating cell nuclear antigen (PCNA). The CTF18-RFC complex catalyzes the ATP-dependent loading of PCNA onto primed and gapped DNA. Interacts with and stimulates DNA polymerase POLH. During DNA repair synthesis, involved in loading DNA polymerase POLE at the sites of local damage. The polypeptide is Chromosome transmission fidelity protein 18 homolog (CHTF18) (Homo sapiens (Human)).